The sequence spans 231 residues: Endonuclease NucS (231 aa).

The protein belongs to the NucS endonuclease family.

Its subcellular location is the cytoplasm. Functionally, cleaves both 3' and 5' ssDNA extremities of branched DNA structures. The protein is Endonuclease NucS of Pseudarthrobacter chlorophenolicus (strain ATCC 700700 / DSM 12829 / CIP 107037 / JCM 12360 / KCTC 9906 / NCIMB 13794 / A6) (Arthrobacter chlorophenolicus).